Reading from the N-terminus, the 496-residue chain is Protein RepR (496 aa).

The DNA-binding element occupies 120-141; that stretch reads SDILTTAIDLGFMPTLIIKSDK.

Functionally, essential for replication. The protein is Protein RepR (repR) of Streptococcus agalactiae.